A 165-amino-acid polypeptide reads, in one-letter code: ATP synthase subunit b (165 aa).

Residues 5–27 (INSTTLGNIIITLGSVFLLYYLI) form a helical membrane-spanning segment.

Belongs to the ATPase B chain family. In terms of assembly, F-type ATPases have 2 components, F(1) - the catalytic core - and F(0) - the membrane proton channel. F(1) has five subunits: alpha(3), beta(3), gamma(1), delta(1), epsilon(1). F(0) has three main subunits: a(1), b(2) and c(10-14). The alpha and beta chains form an alternating ring which encloses part of the gamma chain. F(1) is attached to F(0) by a central stalk formed by the gamma and epsilon chains, while a peripheral stalk is formed by the delta and b chains.

The protein resides in the cell membrane. F(1)F(0) ATP synthase produces ATP from ADP in the presence of a proton or sodium gradient. F-type ATPases consist of two structural domains, F(1) containing the extramembraneous catalytic core and F(0) containing the membrane proton channel, linked together by a central stalk and a peripheral stalk. During catalysis, ATP synthesis in the catalytic domain of F(1) is coupled via a rotary mechanism of the central stalk subunits to proton translocation. Its function is as follows. Component of the F(0) channel, it forms part of the peripheral stalk, linking F(1) to F(0). In Streptococcus thermophilus (strain CNRZ 1066), this protein is ATP synthase subunit b.